Reading from the N-terminus, the 197-residue chain is Probable GTP-binding protein EngB (197 aa).

Positions 25–197 constitute an EngB-type G domain; the sequence is SAPEIAFAGR…VRDEFFKFTR (173 aa). Residues 33 to 40, 60 to 64, 79 to 82, 146 to 149, and 177 to 179 contribute to the GTP site; these read GRSNVGKS, GCTRQ, DLPG, TKID, and ISI. Residues S40 and T62 each contribute to the Mg(2+) site.

Belongs to the TRAFAC class TrmE-Era-EngA-EngB-Septin-like GTPase superfamily. EngB GTPase family. The cofactor is Mg(2+).

Functionally, necessary for normal cell division and for the maintenance of normal septation. In Wolbachia pipientis subsp. Culex pipiens (strain wPip), this protein is Probable GTP-binding protein EngB.